The sequence spans 298 residues: Porphobilinogen deaminase (298 aa).

Position 239 is an S-(dipyrrolylmethanemethyl)cysteine (C239).

The protein belongs to the HMBS family. Monomer. The cofactor is dipyrromethane.

It catalyses the reaction 4 porphobilinogen + H2O = hydroxymethylbilane + 4 NH4(+). Its pathway is porphyrin-containing compound metabolism; protoporphyrin-IX biosynthesis; coproporphyrinogen-III from 5-aminolevulinate: step 2/4. Tetrapolymerization of the monopyrrole PBG into the hydroxymethylbilane pre-uroporphyrinogen in several discrete steps. The chain is Porphobilinogen deaminase from Ehrlichia chaffeensis (strain ATCC CRL-10679 / Arkansas).